A 318-amino-acid chain; its full sequence is MKIGKRILLGLVAVCALFLGIIYLWGYKFNIYLVPPSPQKYVRVALKNMDELGLFTDSKEWVETKKKTIEETSNAKNYAETIPFLQKAIKVAGGKHSFIEHEEDISKRSMTKYIKPKAEIEGNTLILTIPEFTGNDSQASDYANFLESSLHKNNYNGVIVDLRGNRGGDLSPMVLGLSPLLPDGTLFTYVDKSSHSKPVELQNGEINSGGSSTKISDNKKIKKAPIAVLIDNNTGSSGELTALCFEGIPNVKFLGSDSAGYTSANQTVYLYDGSTLQITSAFVKDRTNNIYKNFPISPDIQTNNAKSSAIEWIKSQIK.

Residues 7–28 traverse the membrane as a helical segment; the sequence is ILLGLVAVCALFLGIIYLWGYK.

The protein localises to the cell membrane. This Lactococcus lactis subsp. lactis (Streptococcus lactis) protein is Nisin-resistance protein (nsr).